Consider the following 349-residue polypeptide: Estrogen receptor (349 aa).

The segment at residues Tyr-1 to Met-5 is a DNA-binding region (nuclear receptor). Positions Tyr-1–Thr-38 are disordered. Over residues Lys-12–Arg-24 the composition is skewed to basic residues. The 237-residue stretch at Thr-65 to His-301 folds into the NR LBD domain. The segment at Pro-306 to Pro-327 is disordered.

It belongs to the nuclear hormone receptor family. NR3 subfamily. Binds DNA as a homodimer. Can form a heterodimer with ER-beta.

The protein resides in the nucleus. The steroid hormones and their receptors are involved in the regulation of eukaryotic gene expression and affect cellular proliferation and differentiation in target tissues. In Anolis carolinensis (Green anole), this protein is Estrogen receptor (ESR1).